Reading from the N-terminus, the 347-residue chain is NADH-ubiquinone oxidoreductase chain 2 (347 aa).

The next 9 membrane-spanning stretches (helical) occupy residues 1–21, 59–79, 93–115, 149–169, 178–198, 201–221, 239–259, 274–294, and 325–345; these read MNPF…MIVM, YFMT…INLL, TASM…HFWV, INPN…GWGG, IMAY…IYNP, TILN…MFAL, IITT…PLTG, DSII…YFYM, and LLPT…MLVV.

It belongs to the complex I subunit 2 family. As to quaternary structure, core subunit of respiratory chain NADH dehydrogenase (Complex I) which is composed of 45 different subunits. Interacts with TMEM242.

The protein localises to the mitochondrion inner membrane. It catalyses the reaction a ubiquinone + NADH + 5 H(+)(in) = a ubiquinol + NAD(+) + 4 H(+)(out). In terms of biological role, core subunit of the mitochondrial membrane respiratory chain NADH dehydrogenase (Complex I) which catalyzes electron transfer from NADH through the respiratory chain, using ubiquinone as an electron acceptor. Essential for the catalytic activity and assembly of complex I. This Hippopotamus amphibius (Hippopotamus) protein is NADH-ubiquinone oxidoreductase chain 2.